The sequence spans 238 residues: Probable 2-phosphosulfolactate phosphatase (238 aa).

The protein belongs to the ComB family. Mg(2+) serves as cofactor.

The catalysed reaction is (2R)-O-phospho-3-sulfolactate + H2O = (2R)-3-sulfolactate + phosphate. The polypeptide is Probable 2-phosphosulfolactate phosphatase (Carboxydothermus hydrogenoformans (strain ATCC BAA-161 / DSM 6008 / Z-2901)).